The chain runs to 339 residues: Biotin synthase (339 aa).

The Radical SAM core domain maps to 47 to 276 (FYGKKVKLNM…SKEIRISGGR (230 aa)). Residues C65, C69, and C72 each contribute to the [4Fe-4S] cluster site. Residues C109, C141, C201, and R271 each coordinate [2Fe-2S] cluster.

It belongs to the radical SAM superfamily. Biotin synthase family. As to quaternary structure, homodimer. [4Fe-4S] cluster is required as a cofactor. [2Fe-2S] cluster serves as cofactor.

The enzyme catalyses (4R,5S)-dethiobiotin + (sulfur carrier)-SH + 2 reduced [2Fe-2S]-[ferredoxin] + 2 S-adenosyl-L-methionine = (sulfur carrier)-H + biotin + 2 5'-deoxyadenosine + 2 L-methionine + 2 oxidized [2Fe-2S]-[ferredoxin]. The protein operates within cofactor biosynthesis; biotin biosynthesis; biotin from 7,8-diaminononanoate: step 2/2. Its function is as follows. Catalyzes the conversion of dethiobiotin (DTB) to biotin by the insertion of a sulfur atom into dethiobiotin via a radical-based mechanism. In Bacillus velezensis (strain DSM 23117 / BGSC 10A6 / LMG 26770 / FZB42) (Bacillus amyloliquefaciens subsp. plantarum), this protein is Biotin synthase.